The chain runs to 130 residues: Small ribosomal subunit protein uS11 (130 aa).

It belongs to the universal ribosomal protein uS11 family. In terms of assembly, part of the 30S ribosomal subunit. Interacts with proteins S7 and S18. Binds to IF-3.

Its function is as follows. Located on the platform of the 30S subunit, it bridges several disparate RNA helices of the 16S rRNA. Forms part of the Shine-Dalgarno cleft in the 70S ribosome. The sequence is that of Small ribosomal subunit protein uS11 from Nitratiruptor sp. (strain SB155-2).